The chain runs to 85 residues: MSQRGNRKTQVGVVVSDKMDKTVVVRVSHLVKHPVYNKYIKRSVKYKAHDTDNSCKTGDRVLIVETRPLSKDKRWKVRQIIDRVE.

The protein belongs to the universal ribosomal protein uS17 family. As to quaternary structure, part of the 30S ribosomal subunit.

In terms of biological role, one of the primary rRNA binding proteins, it binds specifically to the 5'-end of 16S ribosomal RNA. This chain is Small ribosomal subunit protein uS17, found in Geobacter sulfurreducens (strain ATCC 51573 / DSM 12127 / PCA).